The sequence spans 642 residues: Threonine--tRNA ligase (642 aa).

The TGS domain maps to 1–61 (MPAITLPDGS…AADAQVVFVT (61 aa)). A catalytic region spans residues 243 to 536 (DHRRLGKEMD…LIEQYAGRFP (294 aa)). Residues C336, H387, and H513 each coordinate Zn(2+).

This sequence belongs to the class-II aminoacyl-tRNA synthetase family. As to quaternary structure, homodimer. It depends on Zn(2+) as a cofactor.

The protein resides in the cytoplasm. The enzyme catalyses tRNA(Thr) + L-threonine + ATP = L-threonyl-tRNA(Thr) + AMP + diphosphate + H(+). Catalyzes the attachment of threonine to tRNA(Thr) in a two-step reaction: L-threonine is first activated by ATP to form Thr-AMP and then transferred to the acceptor end of tRNA(Thr). Also edits incorrectly charged L-seryl-tRNA(Thr). This is Threonine--tRNA ligase from Granulibacter bethesdensis (strain ATCC BAA-1260 / CGDNIH1).